Reading from the N-terminus, the 152-residue chain is Small ribosomal subunit protein uS19u (152 aa).

This sequence belongs to the universal ribosomal protein uS19 family.

It localises to the cytoplasm. In Arabidopsis thaliana (Mouse-ear cress), this protein is Small ribosomal subunit protein uS19u (RPS15A).